We begin with the raw amino-acid sequence, 476 residues long: Viral inhibitor of caspase-8-induced apoptosis (476 aa).

Belongs to the herpesviridae US22 family. Interacts with host pro-caspase-8/CASP8; this interaction inhibits CASP8 activation.

Plays a role in the inhibition of apoptosis by interacting with the pro-domain of pro-caspase-8/CASP8 and thus preventing its activation. This chain is Viral inhibitor of caspase-8-induced apoptosis (UL36), found in Human cytomegalovirus (strain Merlin) (HHV-5).